Reading from the N-terminus, the 500-residue chain is MASMLVAQRLACSFQHSYRLLVPGSRHISQAAAKVDVEFDYDGRLMKTEVPGLRCQELMKQLNIIQNAEAVHFFCNYEESRGNYLVDVDGNRMLDLYSQISSVPIGYSHPGLLKLIQQPQNASMFVNRPALGILLPENFVEKLRQSLLSVAPKGMSQLITMACGSCSNENGLKTIFMWYRSKERGQRGFPQEELETCMINQAPWCPDYSILSFMGAFHGRTMGCLATTHSKAIHKIDIPSFDWPIAPFPRLKYPLEEFVKENQQEEARCLEEVEDLIVKYRKKKKTVAGIIVEPIQSEGGDNHASDDFFRKLRDIPRKQCCAFLVDVVQTGGGCTGKFWAHEHWARDDPEDVMTSSKKMMTGGFFHKEEFRPNAPYRIFNTWLGDPSKNLLLAEVINIIKREDLLNNAAHAGKALLTGLLDLQARYPQFISRVRGRGTFCSFDTPDDSIRNKLILIARNKGVVLGGCGDKSIRFRPTLVFRDHHAHLFLNIFSDILADFK.

The transit peptide at 1-28 (MASMLVAQRLACSFQHSYRLLVPGSRHI) directs the protein to the mitochondrion. A [2Fe-2S] cluster-binding site is contributed by cysteine 163. Pyridoxal 5'-phosphate is bound at residue 164 to 165 (GS). Cysteine 166 is a [2Fe-2S] cluster binding site. Arginine 220 is a binding site for substrate. The residue at position 231 (lysine 231) is an N6-succinyllysine. Residue lysine 252 is modified to N6-acetyllysine; alternate. Lysine 252 carries the N6-succinyllysine; alternate modification. N6-acetyllysine is present on residues lysine 279 and lysine 318. Lysine 357 carries the post-translational modification N6-(pyridoxal phosphate)lysine. A pyridoxal 5'-phosphate-binding site is contributed by threonine 381. An N6-acetyllysine; alternate modification is found at lysine 413. Lysine 413 carries the post-translational modification N6-succinyllysine; alternate. N6-acetyllysine occurs at positions 452 and 470.

It belongs to the class-III pyridoxal-phosphate-dependent aminotransferase family. In terms of assembly, homodimer; disulfide-linked. Pyridoxal 5'-phosphate is required as a cofactor. Requires [2Fe-2S] cluster as cofactor.

The protein localises to the mitochondrion matrix. The catalysed reaction is 4-aminobutanoate + 2-oxoglutarate = succinate semialdehyde + L-glutamate. It carries out the reaction (S)-3-amino-2-methylpropanoate + 2-oxoglutarate = 2-methyl-3-oxopropanoate + L-glutamate. Catalyzes the conversion of gamma-aminobutyrate and L-beta-aminoisobutyrate to succinate semialdehyde and methylmalonate semialdehyde, respectively. Can also convert delta-aminovalerate and beta-alanine. The sequence is that of 4-aminobutyrate aminotransferase, mitochondrial (ABAT) from Bos taurus (Bovine).